Here is a 149-residue protein sequence, read N- to C-terminus: UPF0178 protein lwe1471 (149 aa).

The protein belongs to the UPF0178 family.

This is UPF0178 protein lwe1471 from Listeria welshimeri serovar 6b (strain ATCC 35897 / DSM 20650 / CCUG 15529 / CIP 8149 / NCTC 11857 / SLCC 5334 / V8).